A 147-amino-acid chain; its full sequence is Transthyretin (147 aa).

The first 20 residues, 1–20, serve as a signal peptide directing secretion; it reads MASHRLLLLCLAGLVFVSEA. Residue C30 is modified to Sulfocysteine. Residue K35 coordinates L-thyroxine. E62 is modified (4-carboxyglutamate). S72 carries the post-translational modification Phosphoserine. E74 contributes to the L-thyroxine binding site. N-linked (GlcNAc...) asparagine glycosylation is present at N118. Residue S137 coordinates L-thyroxine.

This sequence belongs to the transthyretin family. Homotetramer. Dimer of dimers. In the homotetramer, subunits assemble around a central channel that can accommodate two ligand molecules. Interacts with RBP4. Sulfonation of the reactive cysteine Cys-30 enhances the stability of the native conformation of TTR, avoiding misassembly of the protein leading to amyloid formation. Detected in brain.

It is found in the secreted. Its function is as follows. Thyroid hormone-binding protein. Probably transports thyroxine from the bloodstream to the brain. This chain is Transthyretin (TTR), found in Pan troglodytes (Chimpanzee).